The following is a 216-amino-acid chain: Imidazole glycerol phosphate synthase subunit HisH (216 aa).

Residues 5–213 form the Glutamine amidotransferase type-1 domain; that stretch reads RLAVIDYDAG…VEFVARRLPA (209 aa). The Nucleophile role is filled by cysteine 83. Residues histidine 188 and glutamate 190 contribute to the active site.

Heterodimer of HisH and HisF.

Its subcellular location is the cytoplasm. The catalysed reaction is 5-[(5-phospho-1-deoxy-D-ribulos-1-ylimino)methylamino]-1-(5-phospho-beta-D-ribosyl)imidazole-4-carboxamide + L-glutamine = D-erythro-1-(imidazol-4-yl)glycerol 3-phosphate + 5-amino-1-(5-phospho-beta-D-ribosyl)imidazole-4-carboxamide + L-glutamate + H(+). It catalyses the reaction L-glutamine + H2O = L-glutamate + NH4(+). The protein operates within amino-acid biosynthesis; L-histidine biosynthesis; L-histidine from 5-phospho-alpha-D-ribose 1-diphosphate: step 5/9. Its function is as follows. IGPS catalyzes the conversion of PRFAR and glutamine to IGP, AICAR and glutamate. The HisH subunit catalyzes the hydrolysis of glutamine to glutamate and ammonia as part of the synthesis of IGP and AICAR. The resulting ammonia molecule is channeled to the active site of HisF. This Synechococcus sp. (strain JA-3-3Ab) (Cyanobacteria bacterium Yellowstone A-Prime) protein is Imidazole glycerol phosphate synthase subunit HisH.